The following is a 622-amino-acid chain: Protein FAM234B (622 aa).

Residues 1-68 (MATVLSRALK…EPDSDAEVAE (68 aa)) form a disordered region. Ser-16 carries the post-translational modification Phosphoserine. Thr-26 is subject to Phosphothreonine. Residues Ser-30, Ser-33, and Ser-62 each carry the phosphoserine modification. Residues 104-124 (TSVFLLTLGISMILVLLCAFL) traverse the membrane as a helical segment.

This sequence belongs to the FAM234 family.

Its subcellular location is the membrane. It localises to the golgi outpost. It is found in the cytoplasm. The protein localises to the cytoskeleton. The protein resides in the microtubule organizing center. This Homo sapiens (Human) protein is Protein FAM234B.